Here is a 215-residue protein sequence, read N- to C-terminus: Probable phosphoglycerate mutase GpmB (215 aa).

Residues 8-15 (RHGETQWN), 21-22 (QG), R58, K60, 82-85 (ELDM), 104-105 (RR), and 151-152 (GI) contribute to the substrate site. The active-site Tele-phosphohistidine intermediate is the H9. E82 (proton donor/acceptor) is an active-site residue.

Belongs to the phosphoglycerate mutase family. GpmB subfamily.

It carries out the reaction (2R)-2-phosphoglycerate = (2R)-3-phosphoglycerate. Its pathway is carbohydrate degradation; glycolysis; pyruvate from D-glyceraldehyde 3-phosphate: step 3/5. The protein is Probable phosphoglycerate mutase GpmB of Salmonella agona (strain SL483).